We begin with the raw amino-acid sequence, 249 residues long: Sesquipedalian-1 (249 aa).

One can recognise a PH domain in the interval 17-113; sequence PVDNAGFLYK…WVKALSRASF (97 aa). Disordered regions lie at residues 134–159 and 194–219; these read GGMA…LAPV and EATF…HGPL. Residues 140–152 show a composition bias toward pro residues; the sequence is QPQPQSLPLPPSL. Residue Ser213 is modified to Phosphoserine. The F&amp;H signature appears at 223–235; it reads PFARLHECYGQEI.

It belongs to the sesquipedalian family. In terms of assembly, forms homodimers and heterodimers with PHETA2. Interacts with OCRL and INPP5B. Interaction with OCRL may be important for endosomal morphology and function.

The protein localises to the early endosome. It is found in the recycling endosome. Its subcellular location is the golgi apparatus. The protein resides in the trans-Golgi network. It localises to the cytoplasmic vesicle. The protein localises to the clathrin-coated vesicle. Functionally, plays a role in endocytic trafficking. Required for receptor recycling from endosomes, both to the trans-Golgi network and the plasma membrane. In Homo sapiens (Human), this protein is Sesquipedalian-1.